The sequence spans 328 residues: Interleukin-12 subunit beta (328 aa).

An N-terminal signal peptide occupies residues 1-22 (MCHQQLVISWFSLVFLASPLVA). Residues 23–106 (IWELKKDVYV…LSHSLLLLHK (84 aa)) enclose the Ig-like C2-type domain. Disulfide bonds link C50/C90, C131/C142, and C170/C193. N135 carries an N-linked (GlcNAc...) asparagine glycan. Residue N222 is glycosylated (N-linked (GlcNAc...) asparagine). The region spanning 237 to 328 (PPKNLQLKPL…WSEWASVPCS (92 aa)) is the Fibronectin type-III domain. Residues C300 and C327 are joined by a disulfide bond. Residue W319 is glycosylated (C-linked (Man) tryptophan).

This sequence belongs to the IL-12B family. As to quaternary structure, heterodimer with IL12A; disulfide-linked. The heterodimer is known as interleukin IL-12. Heterodimer with IL23A; disulfide-linked. The heterodimer is known as interleukin IL-23. Also secreted as a monomer. Interacts with NBR1; this interaction promotes IL-12 secretion. Post-translationally, known to be C-mannosylated in the recombinant protein; it is not yet known for sure if the wild-type protein is also modified.

It is found in the secreted. Its function is as follows. Cytokine that can act as a growth factor for activated T and NK cells, enhance the lytic activity of NK/lymphokine-activated killer cells, and stimulate the production of IFN-gamma by resting PBMC. In terms of biological role, associates with IL23A to form the IL-23 interleukin, a heterodimeric cytokine which functions in innate and adaptive immunity. IL-23 may constitute with IL-17 an acute response to infection in peripheral tissues. IL-23 binds to a heterodimeric receptor complex composed of IL12RB1 and IL23R, activates the Jak-Stat signaling cascade, stimulates memory rather than naive T-cells and promotes production of pro-inflammatory cytokines. IL-23 induces autoimmune inflammation and thus may be responsible for autoimmune inflammatory diseases and may be important for tumorigenesis. The sequence is that of Interleukin-12 subunit beta (IL12B) from Homo sapiens (Human).